The primary structure comprises 392 residues: N-acyl-phosphatidylethanolamine-hydrolyzing phospholipase D (392 aa).

Methionine 1 is modified (N-acetylmethionine). Over residues 1–16 the composition is skewed to polar residues; that stretch reads MDENETNQLLMTSNQY. Residues 1 to 39 are disordered; that stretch reads MDENETNQLLMTSNQYPKEAVRKRQNSRNSGGSDSSRFS. The span at 27-36 shows a compositional bias: low complexity; the sequence is SRNSGGSDSS. Zn(2+)-binding residues include histidine 183 and histidine 185. Residue tyrosine 186 participates in an N-acyl-1,2-diacyl-sn-glycero-3-phosphoethanolamine binding. The Zn(2+) site is built by aspartate 187, histidine 188, and histidine 251. 2 residues coordinate deoxycholate: lysine 254 and methionine 258. Aspartate 282 is a binding site for Zn(2+). Histidine 319 serves as a coordination point for an N-acyl-1,2-diacyl-sn-glycero-3-phosphoethanolamine. Residue histidine 341 participates in Zn(2+) binding. Alanine 346 is a binding site for deoxycholate.

It belongs to the NAPE-PLD family. As to quaternary structure, homodimer. Bile acids promote the assembly of inactive monomers into an active dimer and enable catalysis. Zn(2+) is required as a cofactor. Widely expressed. Highest expression in brain, kidney and testis (at protein level). Expressed in adipose tissue (at protein level).

The protein localises to the golgi apparatus membrane. It localises to the early endosome membrane. It is found in the nucleus envelope. Its subcellular location is the nucleus. The protein resides in the nucleoplasm. The enzyme catalyses an N-acyl-1,2-diacyl-sn-glycero-3-phosphoethanolamine + H2O = an N-acylethanolamine + a 1,2-diacyl-sn-glycero-3-phosphate + H(+). It catalyses the reaction N-butanoyl-1-hexadecanoyl-2-(9Z,12Z-octadecadienoyl)-sn-glycero-3-phosphoethanolamine + H2O = N-butanoyl ethanolamine + 1-hexadecanoyl-2-(9Z,12Z-octadecadienoyl)-sn-glycero-3-phosphate + H(+). The catalysed reaction is N-hexanoyl-1-hexadecanoyl-2-(9Z,12Z-octadecadienoyl)-sn-glycero-3-phosphoethanolamine + H2O = N-hexanoyl ethanolamine + 1-hexadecanoyl-2-(9Z,12Z-octadecadienoyl)-sn-glycero-3-phosphate + H(+). It carries out the reaction N-octanoyl-1-hexadecanoyl-2-(9Z,12Z-octadecadienoyl)-sn-glycero-3-phosphoethanolamine + H2O = N-octanoyl ethanolamine + 1-hexadecanoyl-2-(9Z,12Z-octadecadienoyl)-sn-glycero-3-phosphate + H(+). The enzyme catalyses N-decanoyl-1-hexadecanoyl-2-(9Z,12Z-octadecadienoyl)-sn-glycero-3-phosphoethanolamine + H2O = N-decanoyl ethanolamine + 1-hexadecanoyl-2-(9Z,12Z-octadecadienoyl)-sn-glycero-3-phosphate + H(+). It catalyses the reaction N-dodecanoyl-1,2-di-(9Z-octadecenoyl)-sn-glycero-3-phosphoethanolamine + H2O = N-dodecanoylethanolamine + 1,2-di-(9Z-octadecenoyl)-sn-glycero-3-phosphate + H(+). The catalysed reaction is N-tetradecanoyl-1,2-di-(9Z-octadecenoyl)-sn-glycero-3-phosphoethanolamine + H2O = N-tetradecanoylethanolamine + 1,2-di-(9Z-octadecenoyl)-sn-glycero-3-phosphate + H(+). It carries out the reaction N-hexadecanoyl-1,2-di-(9Z-octadecenoyl)-sn-glycero-3-phosphoethanolamine + H2O = N-hexadecanoylethanolamine + 1,2-di-(9Z-octadecenoyl)-sn-glycero-3-phosphate + H(+). The enzyme catalyses N,1-dihexadecanoyl-2-(9Z,12Z-octadecadienoyl)-sn-glycero-3-phosphoethanolamine + H2O = 1-hexadecanoyl-2-(9Z,12Z-octadecadienoyl)-sn-glycero-3-phosphate + N-hexadecanoylethanolamine + H(+). It catalyses the reaction N-octadecanoyl-1,2-di-(9Z-octadecenoyl)-sn-glycero-3-phosphoethanolamine + H2O = N-octadecanoyl ethanolamine + 1,2-di-(9Z-octadecenoyl)-sn-glycero-3-phosphate + H(+). The catalysed reaction is N,1,2-tri-(9Z-octadecenoyl)-sn-glycero-3-phosphoethanolamine + H2O = N-(9Z-octadecenoyl) ethanolamine + 1,2-di-(9Z-octadecenoyl)-sn-glycero-3-phosphate + H(+). It carries out the reaction N-(5Z,8Z,11Z,14Z-eicosatetraenoyl)-1,2-diacyl-sn-glycero-3-phosphoethanolamine + H2O = N-(5Z,8Z,11Z,14Z-eicosatetraenoyl)-ethanolamine + a 1,2-diacyl-sn-glycero-3-phosphate + H(+). The enzyme catalyses N-(5Z,8Z,11Z,14Z-eicosatetraenoyl)-1,2-di-(9Z-octadecenoyl)-sn-glycero-3-phosphoethanolamine + H2O = N-(5Z,8Z,11Z,14Z-eicosatetraenoyl)-ethanolamine + 1,2-di-(9Z-octadecenoyl)-sn-glycero-3-phosphate + H(+). It catalyses the reaction 1-O-(1Z-octadecenoyl)-2-(9Z-octadecenoyl)-sn-glycero-3-phospho-N-hexadecanoyl-ethanolamine + H2O = 1-O-(1Z-octadecenoyl)-2-(9Z-octadecenoyl)-sn-glycero-3-phosphate + N-hexadecanoylethanolamine + H(+). The catalysed reaction is N,1-diacyl-sn-glycero-3-phosphoethanolamine + H2O = an N-acylethanolamine + a 1-acyl-sn-glycero-3-phosphate + H(+). It carries out the reaction N,1-dihexadecanoyl-sn-glycero-3-phosphoethanolamine + H2O = N-hexadecanoylethanolamine + 1-hexadecanoyl-sn-glycero-3-phosphate + H(+). The enzyme catalyses N-(5Z,8Z,11Z,14Z-eicosatetraenoyl)-1-(9Z-octadecenoyl)-sn-glycero-3-phosphoethanolamine + H2O = N-(5Z,8Z,11Z,14Z-eicosatetraenoyl)-ethanolamine + 1-(9Z-octadecenoyl)-sn-glycero-3-phosphate + H(+). Its activity is regulated as follows. Activated by divalent cations. Activated by bile acids. Its function is as follows. D-type phospholipase that hydrolyzes N-acyl-phosphatidylethanolamines (NAPEs) to produce bioactive N-acylethanolamines/fatty acid ethanolamides (NAEs/FAEs) and phosphatidic acid. Cleaves the terminal phosphodiester bond of diacyl- and alkenylacyl-NAPEs, primarily playing a role in the generation of long-chain saturated and monounsaturated NAEs in the brain. May control NAPE homeostasis in dopaminergic neuron membranes and regulate neuron survival, partly through RAC1 activation. As a regulator of lipid metabolism in the adipose tissue, mediates the crosstalk between adipocytes, gut microbiota and immune cells to control body temperature and weight. In particular, regulates energy homeostasis by promoting cold-induced brown or beige adipocyte differentiation program to generate heat from fatty acids and glucose. Has limited D-type phospholipase activity toward N-acyl lyso-NAPEs. The sequence is that of N-acyl-phosphatidylethanolamine-hydrolyzing phospholipase D (NAPEPLD) from Bos taurus (Bovine).